The sequence spans 544 residues: MAAKDVQFGNEVRQKMVNGVNILANAVRVTLGPKGRNVVVDRAFGGPHITKDGVTVAKEIELKDKFENMGAQMVKEVASKTNDVAGDGTTTATVLAQSIVAEGMKYVTAGMNPTDLKRGIDKAVAALVEELKNIAKPCDTSKEIAQVGSISANSDEQVGAIIAEAMEKVGKEGVITVEDGKSLENELDVVEGMQFDRGYLSPYFINDAEKQIAGLDNPFVLLFDKKISNIRDLLPVLEQVAKASRPLLIIAEDVEGEALATLVVNNIRGILKTVAVKAPGFGDRRKAMLQDIAILTGGVVISEEVGLSLEKATLDDLGQAKRIEIGKENTTVIDGFGDAAQIEARVAEIRQQIETATSDYDKEKLQERVAKLAGGVAVIKVGAATEVEMKEKKDRVEDALHATRAAVEEGVVAGGGVALLRARAALENLHTGNADQDAGVQIVLRAVESPLRQIVANAGGEPSVVVNKVLEGKGNYGYNAGSGEYGDMIGMGVLDPAKVTRSALQHAASIAGLMLTTDCMIAEIPEEKPAVPDMGGMGGMGGMM.

ATP-binding positions include 30–33, Lys51, 87–91, Gly415, and Asp495; these read TLGP and DGTTT.

It belongs to the chaperonin (HSP60) family. In terms of assembly, forms a cylinder of 14 subunits composed of two heptameric rings stacked back-to-back. Interacts with the co-chaperonin GroES.

The protein localises to the cytoplasm. It catalyses the reaction ATP + H2O + a folded polypeptide = ADP + phosphate + an unfolded polypeptide.. Together with its co-chaperonin GroES, plays an essential role in assisting protein folding. The GroEL-GroES system forms a nano-cage that allows encapsulation of the non-native substrate proteins and provides a physical environment optimized to promote and accelerate protein folding. This is Chaperonin GroEL from Neisseria gonorrhoeae (strain ATCC 700825 / FA 1090).